The chain runs to 703 residues: Elongation factor G 2 (703 aa).

The region spanning glutamate 8–serine 291 is the tr-type G domain. GTP-binding positions include alanine 17–threonine 24, aspartate 89–histidine 93, and asparagine 143–aspartate 146.

This sequence belongs to the TRAFAC class translation factor GTPase superfamily. Classic translation factor GTPase family. EF-G/EF-2 subfamily.

The protein localises to the cytoplasm. Functionally, catalyzes the GTP-dependent ribosomal translocation step during translation elongation. During this step, the ribosome changes from the pre-translocational (PRE) to the post-translocational (POST) state as the newly formed A-site-bound peptidyl-tRNA and P-site-bound deacylated tRNA move to the P and E sites, respectively. Catalyzes the coordinated movement of the two tRNA molecules, the mRNA and conformational changes in the ribosome. This Pseudomonas putida (strain ATCC 47054 / DSM 6125 / CFBP 8728 / NCIMB 11950 / KT2440) protein is Elongation factor G 2 (fusB).